Reading from the N-terminus, the 282-residue chain is Shikimate dehydrogenase (NADP(+)) (282 aa).

Shikimate contacts are provided by residues 16 to 18 and Thr63; that span reads SLS. The active-site Proton acceptor is the Lys67. Shikimate contacts are provided by Asn88 and Asp103. NADP(+) contacts are provided by residues 128–132 and Gly243; that span reads GAGGA.

This sequence belongs to the shikimate dehydrogenase family. As to quaternary structure, homodimer.

It carries out the reaction shikimate + NADP(+) = 3-dehydroshikimate + NADPH + H(+). Its pathway is metabolic intermediate biosynthesis; chorismate biosynthesis; chorismate from D-erythrose 4-phosphate and phosphoenolpyruvate: step 4/7. In terms of biological role, involved in the biosynthesis of the chorismate, which leads to the biosynthesis of aromatic amino acids. Catalyzes the reversible NADPH linked reduction of 3-dehydroshikimate (DHSA) to yield shikimate (SA). The sequence is that of Shikimate dehydrogenase (NADP(+)) from Xylella fastidiosa (strain 9a5c).